The chain runs to 190 residues: GTP cyclohydrolase 1 1 (190 aa).

This sequence belongs to the GTP cyclohydrolase I family. As to quaternary structure, homomer.

It carries out the reaction GTP + H2O = 7,8-dihydroneopterin 3'-triphosphate + formate + H(+). Its pathway is cofactor biosynthesis; 7,8-dihydroneopterin triphosphate biosynthesis; 7,8-dihydroneopterin triphosphate from GTP: step 1/1. The chain is GTP cyclohydrolase 1 1 from Pseudomonas putida (strain ATCC 47054 / DSM 6125 / CFBP 8728 / NCIMB 11950 / KT2440).